The chain runs to 403 residues: MTTVSCDKDENKVDQLGESLSQLRISTRKNNKPSQKKGSLVLSCKKFPHVSVNYVVDKTPKLLTDCKEVHNCSYIINDATLLWNEASRKPRLRPEVCTYIKDSKWENKAVKDSFIGIDLTKGYDDYVPLDRNVLNSLVILKEAYQRYEKTLNPEKTTFVSLRHHIIDIIMCPFLDEPLSLLMTVQPDKNILISVDKSKDKPNGIHETRNSFNKKICYTGFALEDLLIESPTEGHILEHELYYSIVHGSLNDEIDLLIQAEMDSINTLTDTYTEIKSSVHFKLGNTYHRRKLLRMWIQTNLLPKSDLLIGFRNSYSNELEQLKAYKIQDIYHKINNSSIVGKPGKFYKFNPNVANDWFQHIFQVLKQNLLLLSQESTSTTFKVQIDTNLTLSISPASQFVTALG.

Glu223 contacts a divalent metal cation. Residue Glu260 participates in substrate binding. Positions 262, 273, and 274 each coordinate a divalent metal cation. Substrate is bound by residues Lys275 and Gln297.

Belongs to the DXO/Dom3Z family. A divalent metal cation is required as a cofactor.

It is found in the cytoplasm. It carries out the reaction a 5'-end NAD(+)-phospho-ribonucleoside in mRNA + H2O = a 5'-end phospho-ribonucleoside in mRNA + NAD(+) + H(+). It catalyses the reaction a 5'-end (N(7)-methyl 5'-triphosphoguanosine)-ribonucleoside-ribonucleotide in mRNA + H2O = a (N(7)-methyl 5'-triphosphoguanosine)-nucleoside + a 5'-end phospho-ribonucleoside in mRNA + H(+). Decapping enzyme for NAD-capped RNAs: specifically hydrolyzes the nicotinamide adenine dinucleotide (NAD) cap from a subset of RNAs by removing the entire NAD moiety from the 5'-end of an NAD-capped RNA. The NAD-cap is present at the 5'-end of some RNAs and snoRNAs. In contrast to the canonical 5'-end N7 methylguanosine (m7G) cap, the NAD cap promotes mRNA decay. Also acts as a non-canonical decapping enzyme that removes the entire cap structure of m7G capped or incompletely capped RNAs and mediates their subsequent degradation. Has decapping and 5'-3' exonuclease activities. Has decapping activity toward incomplete 5'-end cap mRNAs such as unmethylated 5'-end-capped RNA to release GpppN and 5'-end monophosphate RNA. The 5'-end monophosphate RNA is then degraded by the 5'-3' exoribonuclease activity, enabling this enzyme to decap and degrade incompletely capped mRNAs. In Kluyveromyces lactis (strain ATCC 8585 / CBS 2359 / DSM 70799 / NBRC 1267 / NRRL Y-1140 / WM37) (Yeast), this protein is Decapping and exoribonuclease protein 1.